Here is a 31-residue protein sequence, read N- to C-terminus: Morintide mO3 (31 aa).

The Chitin-binding type-1 domain occupies 1-30 (NRLCCSQYGFCGTTSEYCSRANGCQSNCWG). 2 disulfides stabilise this stretch: Cys4/Cys18 and Cys24/Cys28.

Seeds (at protein level).

Functionally, chitin-binding protein which functions in defense against chitin-containing fungal pathogens. The polypeptide is Morintide mO3 (Moringa oleifera (Horseradish tree)).